The following is a 616-amino-acid chain: Membrane protein insertase YidC (616 aa).

The chain crosses the membrane as a helical span at residues 9-29; that stretch reads ILAVILSGLVLIAWQYFYNVP. The tract at residues 37–80 is disordered; sequence QQQAQAELQKTTPQPTASATPGATPQSGGAAQPSTPAAGQQAQP. Positions 44–71 are enriched in polar residues; the sequence is LQKTTPQPTASATPGATPQSGGAAQPST. Helical transmembrane passes span 388–408, 462–482, 520–540, and 559–579; these read FFGN…LLFF, LPVV…FVTI, VFGH…TMWF, and WMPL…VIYW.

This sequence belongs to the OXA1/ALB3/YidC family. Type 1 subfamily. Interacts with the Sec translocase complex via SecD. Specifically interacts with transmembrane segments of nascent integral membrane proteins during membrane integration.

Its subcellular location is the cell inner membrane. Required for the insertion and/or proper folding and/or complex formation of integral membrane proteins into the membrane. Involved in integration of membrane proteins that insert both dependently and independently of the Sec translocase complex, as well as at least some lipoproteins. Aids folding of multispanning membrane proteins. This chain is Membrane protein insertase YidC, found in Bradyrhizobium diazoefficiens (strain JCM 10833 / BCRC 13528 / IAM 13628 / NBRC 14792 / USDA 110).